The following is a 462-amino-acid chain: tRNA modification GTPase MnmE (462 aa).

The (6S)-5-formyl-5,6,7,8-tetrahydrofolate site is built by R27, E89, and R128. In terms of domain architecture, TrmE-type G spans 223–383 (GLKIAIVGRP…LEAAILAAVG (161 aa)). GTP-binding positions include 233–238 (NVGKSS), 252–258 (TDLPGRT), and 277–280 (DTAG). S237 and T258 together coordinate Mg(2+). A (6S)-5-formyl-5,6,7,8-tetrahydrofolate-binding site is contributed by K462.

The protein belongs to the TRAFAC class TrmE-Era-EngA-EngB-Septin-like GTPase superfamily. TrmE GTPase family. In terms of assembly, homodimer. Heterotetramer of two MnmE and two MnmG subunits. K(+) serves as cofactor.

Its subcellular location is the cytoplasm. Functionally, exhibits a very high intrinsic GTPase hydrolysis rate. Involved in the addition of a carboxymethylaminomethyl (cmnm) group at the wobble position (U34) of certain tRNAs, forming tRNA-cmnm(5)s(2)U34. The polypeptide is tRNA modification GTPase MnmE (Synechococcus sp. (strain ATCC 27144 / PCC 6301 / SAUG 1402/1) (Anacystis nidulans)).